Reading from the N-terminus, the 447-residue chain is Methylenetetrahydrofolate--tRNA-(uracil-5-)-methyltransferase TrmFO (447 aa).

8-13 (GGGLAG) is an FAD binding site. The tract at residues 398 to 421 (NWGLVPAPPKRENGRRLGRQERRR) is disordered. Over residues 406–417 (PKRENGRRLGRQ) the composition is skewed to basic and acidic residues.

The protein belongs to the MnmG family. TrmFO subfamily. The cofactor is FAD.

It localises to the cytoplasm. It carries out the reaction uridine(54) in tRNA + (6R)-5,10-methylene-5,6,7,8-tetrahydrofolate + NADH + H(+) = 5-methyluridine(54) in tRNA + (6S)-5,6,7,8-tetrahydrofolate + NAD(+). The enzyme catalyses uridine(54) in tRNA + (6R)-5,10-methylene-5,6,7,8-tetrahydrofolate + NADPH + H(+) = 5-methyluridine(54) in tRNA + (6S)-5,6,7,8-tetrahydrofolate + NADP(+). Catalyzes the folate-dependent formation of 5-methyl-uridine at position 54 (M-5-U54) in all tRNAs. This chain is Methylenetetrahydrofolate--tRNA-(uracil-5-)-methyltransferase TrmFO, found in Rubrobacter xylanophilus (strain DSM 9941 / JCM 11954 / NBRC 16129 / PRD-1).